A 100-amino-acid chain; its full sequence is Urease subunit gamma (100 aa).

This sequence belongs to the urease gamma subunit family. Heterotrimer of UreA (gamma), UreB (beta) and UreC (alpha) subunits. Three heterotrimers associate to form the active enzyme.

The protein localises to the cytoplasm. The catalysed reaction is urea + 2 H2O + H(+) = hydrogencarbonate + 2 NH4(+). The protein operates within nitrogen metabolism; urea degradation; CO(2) and NH(3) from urea (urease route): step 1/1. The protein is Urease subunit gamma of Rhodococcus opacus (strain B4).